The following is a 190-amino-acid chain: Small ribosomal subunit protein uS5 (190 aa).

The S5 DRBM domain occupies 22–85; it reads FVDKLVHINR…DSAKRNLTRV (64 aa).

The protein belongs to the universal ribosomal protein uS5 family. In terms of assembly, part of the 30S ribosomal subunit. Contacts proteins S4 and S8.

Functionally, with S4 and S12 plays an important role in translational accuracy. In terms of biological role, located at the back of the 30S subunit body where it stabilizes the conformation of the head with respect to the body. The sequence is that of Small ribosomal subunit protein uS5 from Bradyrhizobium sp. (strain BTAi1 / ATCC BAA-1182).